We begin with the raw amino-acid sequence, 932 residues long: RNA-binding protein 12 (932 aa).

The interval 96–116 is disordered; it reads DIPPANASRSGPPPSSGMSSR. The segment covering 98 to 116 has biased composition (low complexity); it reads PPANASRSGPPPSSGMSSR. Residues 304–379 form the RRM 1 domain; sequence LYVSVHGMPF…RYVEVSPATE (76 aa). A phosphoserine mark is found at Ser-352 and Ser-375. Polar residues-rich tracts occupy residues 392 to 401 and 408 to 417; these read KQNMGPSGQT and LPRSKSPSGQ. A disordered region spans residues 392 to 424; sequence KQNMGPSGQTHPPPQTLPRSKSPSGQKRSRSRS. Residues Ser-420, Ser-422, and Ser-424 each carry the phosphoserine modification. Residues 430 to 507 enclose the RRM 2 domain; the sequence is FCVYLKGLPF…RFIQVHPITK (78 aa). Ser-525 is modified (phosphoserine). A compositionally biased stretch (low complexity) spans 717 to 734; it reads NGPPFNFPGNFGGSNAFG. The disordered stretch occupies residues 717–853; it reads NGPPFNFPGN…PGFASSSGKP (137 aa). The segment covering 783–811 has biased composition (gly residues); sequence SGFGGGPQNFGNGPGSLGGPPGFGSGPPG. The span at 824–836 shows a compositional bias: pro residues; sequence AFGPGPGPGPGPG. One can recognise an RRM 3 domain in the interval 856–932; the sequence is TVIKVQNMPF…GSRKVKLVLG (77 aa).

The protein localises to the nucleus. This is RNA-binding protein 12 (RBM12) from Homo sapiens (Human).